The primary structure comprises 366 residues: tRNA/tmRNA (uracil-C(5))-methyltransferase (366 aa).

S-adenosyl-L-methionine is bound by residues Gln-190, Tyr-218, Asn-223, Glu-239, and Asp-299. Cys-324 acts as the Nucleophile in catalysis. Glu-358 acts as the Proton acceptor in catalysis.

It belongs to the class I-like SAM-binding methyltransferase superfamily. RNA M5U methyltransferase family. TrmA subfamily.

It carries out the reaction uridine(54) in tRNA + S-adenosyl-L-methionine = 5-methyluridine(54) in tRNA + S-adenosyl-L-homocysteine + H(+). It catalyses the reaction uridine(341) in tmRNA + S-adenosyl-L-methionine = 5-methyluridine(341) in tmRNA + S-adenosyl-L-homocysteine + H(+). Functionally, dual-specificity methyltransferase that catalyzes the formation of 5-methyluridine at position 54 (m5U54) in all tRNAs, and that of position 341 (m5U341) in tmRNA (transfer-mRNA). The sequence is that of tRNA/tmRNA (uracil-C(5))-methyltransferase from Shigella boydii serotype 18 (strain CDC 3083-94 / BS512).